The primary structure comprises 496 residues: Autophagy-related protein 21 (496 aa).

A WD 1 repeat occupies 1-35 (MKVLQFNQDATCCVVAASSHQISIFNCDPFGKCFE). The segment at 41–86 (SKKKTSNNNGTASNSESRNNEESILITNGSRDRTDAEEEEDNEDNA) is disordered. Residues 46 to 57 (SNNNGTASNSES) show a composition bias toward low complexity. A compositionally biased stretch (acidic residues) spans 75 to 84 (DAEEEEDNED). A WD 2 repeat occupies 148–190 (VMNRKRMCVLLESDQIFIYDISCMKPLETIDLWEDHYKRSQAN). The residue at position 213 (Thr213) is a Phosphothreonine. The residue at position 237 (Ser237) is a Phosphoserine. 3 WD repeats span residues 294–334 (VHKG…DYMS), 346–385 (TRLC…NSLP), and 448–488 (VNES…GECV). A L/FRRG motif motif is present at residues 342-346 (FRRGT).

Belongs to the WD repeat PROPPIN family.

The protein resides in the cytoplasm. The protein localises to the vacuole membrane. Functionally, required for cytoplasm to vacuole transport (Cvt) vesicles formation and mitophagy. Involved in binding of phosphatidylethanolamine to ATG8 and in recruitment of ATG8 and ATG5 to the pre-autophagosomal structure. Protects ATG8 from ARG4-mediated cleavage. Essential for maturation of proaminopeptidase I. The polypeptide is Autophagy-related protein 21 (ATG21) (Saccharomyces cerevisiae (strain YJM789) (Baker's yeast)).